Here is a 1000-residue protein sequence, read N- to C-terminus: Ribosome assembly protein 1 (1000 aa).

Positions 17–246 (ENIRNFTLLA…YEKKLGLKQK (230 aa)) constitute a tr-type G domain. GTP is bound by residues 26 to 33 (AHVDHGKT), 100 to 104 (DSPGH), and 154 to 157 (NKMD).

This sequence belongs to the TRAFAC class translation factor GTPase superfamily. Classic translation factor GTPase family.

The protein resides in the cytoplasm. The enzyme catalyses GTP + H2O = GDP + phosphate + H(+). Its activity is regulated as follows. GTPase activity is stimulated in the presence of 60S subunits. In terms of biological role, GTPase involved in the biogenesis of the 60S ribosomal subunit and translational activation of ribosomes. Together with sdo1, may trigger the GTP-dependent release of tif6 from 60S pre-ribosomes in the cytoplasm, thereby activating ribosomes for translation competence by allowing 80S ribosome assembly and facilitating tif6 recycling to the nucleus, where it is required for 60S rRNA processing and nuclear export. Inhibits GTPase activity of ribosome-bound EF-2. In Schizosaccharomyces pombe (strain 972 / ATCC 24843) (Fission yeast), this protein is Ribosome assembly protein 1 (ria1).